The primary structure comprises 766 residues: Serine/threonine-protein kinase PKH1 (766 aa).

A disordered region spans residues 1 to 52 (MGNRSLTEADHALLSKPLVPTSAEHTQTQEYPRPFVDGSNSQSGSELQASPQ). A compositionally biased stretch (polar residues) spans 38 to 52 (GSNSQSGSELQASPQ). A Protein kinase domain is found at 125-391 (FKFGEQLGDG…IKQIKAHLFF (267 aa)). ATP-binding positions include 135 to 137 (SYS) and K154. Residues 156–201 (LSKEYLIRQKKVKYVTVEKLALQKLNGTKGIFKLFFTFQDEASLYF) are PIF-pocket. ATP-binding positions include 204–206 (EYA) and D210. The Proton acceptor role is filled by D249. Residues E253 and D267 each contribute to the ATP site. 2 positions are modified to phosphoserine: S294 and S296. Residues 476–495 (TSQPKLGSKSSTSVRSASNN) are compositionally biased toward polar residues. Disordered stretches follow at residues 476 to 529 (TSQP…NRSR) and 725 to 745 (PEEG…SSSN). The segment covering 511–521 (SVSSPSISTTS) has biased composition (low complexity). Positions 735-745 (PTSLQTRSSSN) are enriched in polar residues.

It belongs to the protein kinase superfamily. AGC Ser/Thr protein kinase family. PDPK1 subfamily.

The catalysed reaction is L-seryl-[protein] + ATP = O-phospho-L-seryl-[protein] + ADP + H(+). It catalyses the reaction L-threonyl-[protein] + ATP = O-phospho-L-threonyl-[protein] + ADP + H(+). Activates YPK1 by phosphorylating of a threonine residue. The chain is Serine/threonine-protein kinase PKH1 (PKH1) from Saccharomyces cerevisiae (strain ATCC 204508 / S288c) (Baker's yeast).